We begin with the raw amino-acid sequence, 141 residues long: MDQSSSTLLINQRKSSSSPTRIPPKQKRKSTTTHKPIKVRYISNPMRVETCPSKFRELVQELTGQDAADLPPSPTTFTAVDLHRPCESEMNLEPLDGEVRGEYYSPLDEEVFNAPQMSAGLSGFFSSGFYNVNALGSIGSL.

Residues 1-20 (MDQSSSTLLINQRKSSSSPT) are compositionally biased toward polar residues. The disordered stretch occupies residues 1–36 (MDQSSSTLLINQRKSSSSPTRIPPKQKRKSTTTHKP). Residues 1-38 (MDQSSSTLLINQRKSSSSPTRIPPKQKRKSTTTHKPIK) constitute a chloroplast transit peptide. Positions 13 to 29 (RKSSSSPTRIPPKQKRK) match the Bipartite nuclear localization signal motif. Over residues 24-36 (PKQKRKSTTTHKP) the composition is skewed to basic residues. Residues 55–64 (FRELVQELTG) carry the VQ motif.

Interacts with sigma factors in chloroplast. Interacts with WRKY33 in the nucleus.

It localises to the plastid. It is found in the chloroplast. The protein localises to the nucleus. Functions as activator of WRKY33 in plant defense against necrotrophic pathogens by stimulating the DNA-binding activity of WRKY33. The chain is Sigma factor binding protein 2, chloroplastic (SIB2) from Arabidopsis thaliana (Mouse-ear cress).